The primary structure comprises 152 residues: Small ribosomal subunit protein bS16 (152 aa).

The disordered stretch occupies residues 84 to 152; that stretch reads WKWEASNNPQ…EAAAEEEKSE (69 aa). Basic and acidic residues predominate over residues 97–123; it reads PGQKAKELAAEKAEKEADRKAAEEEAK. Residues 124 to 144 are compositionally biased toward low complexity; that stretch reads AAAAAPAAEEAPAEEAPAAEA.

Belongs to the bacterial ribosomal protein bS16 family.

This is Small ribosomal subunit protein bS16 from Maricaulis maris (strain MCS10) (Caulobacter maris).